The chain runs to 884 residues: Cadherin-1 (884 aa).

An N-terminal signal peptide occupies residues 1–23; it reads MGARCRSFSALLLLLQVSSWLCQ. A propeptide spanning residues 24 to 156 is cleaved from the precursor; sequence ELEPESCSPG…VYPGLRRQKR (133 aa). A disordered region spans residues 119-139; the sequence is KSMGHHHHRHHHRDPASESNP. Positions 121–131 are enriched in basic residues; sequence MGHHHHRHHHR. Cadherin domains are found at residues 157–264, 265–377, 378–488, 489–595, and 596–699; these read DWVI…RPEF, TQEV…APVF, NPST…APIF, MPAE…DNAP, and IPEP…NCMK. Over 157–709 the chain is Extracellular; the sequence is DWVIPPISCP…AGIVAAGLQV (553 aa). Position 259 (Asp-259) interacts with Ca(2+). O-linked (Man...) serine glycans are attached at residues Ser-282 and Ser-287. Asp-290 is a binding site for Ca(2+). O-linked (Man...) threonine glycosylation is found at Thr-360, Thr-472, Thr-474, and Thr-511. N-linked (GlcNAc...) asparagine glycosylation occurs at Asn-560. O-linked (Man...) threonine glycosylation is found at Thr-578, Thr-580, and Thr-582. A glycan (N-linked (GlcNAc...) asparagine) is linked at Asn-639. The chain crosses the membrane as a helical span at residues 710-733; the sequence is PAILGILGGILALLILILLLLLFL. Residues 734 to 884 lie on the Cytoplasmic side of the membrane; that stretch reads RRRTVVKEPL…ADMYGGGEDD (151 aa). Residues 749–808 form a disordered region; sequence DTRDNVYYYDEEGGGEEDQDFDLSQLHRGLDARPEVTRNDVAPTLMSVPQYRPRPANPDE. Phosphotyrosine; by SRC occurs at positions 755, 756, and 757. The span at 757–769 shows a compositional bias: acidic residues; it reads YDEEGGGEEDQDF. The tract at residues 760-771 is required for binding CTNND1 and PSEN1; it reads EGGGEEDQDFDL. Position 772 is a phosphoserine (Ser-772). The segment covering 776–786 has biased composition (basic and acidic residues); the sequence is RGLDARPEVTR. Ser-795, Ser-840, Ser-842, and Ser-848 each carry phosphoserine. The segment at 813–884 is required for binding alpha, beta and gamma catenins; sequence IDENLKAADS…ADMYGGGEDD (72 aa).

As to quaternary structure, homodimer; disulfide-linked. Component of an E-cadherin/ catenin adhesion complex composed of at least E-cadherin/CDH1, beta-catenin/CTNNB1 or gamma-catenin/JUP, and potentially alpha-catenin/CTNNA1; the complex is located to adherens junctions. Found in a complex composed of CDH1, RAP1A and PKP3; PKP3 acts as a scaffold protein within the complex, the complex is required for CDH1 localization to mature desmosome cell junctions. Interacts with the TRPV4 and CTNNB1 complex. Interacts with CTNND1. The stable association of CTNNA1 is controversial as CTNNA1 was shown not to bind to F-actin when assembled in the complex. Alternatively, the CTNNA1-containing complex may be linked to F-actin by other proteins such as LIMA1. Interaction with PSEN1, cleaves CDH1 resulting in the disassociation of cadherin-based adherens junctions (CAJs). Interacts with AJAP1 and DLGAP5. Interacts with TBC1D2. Interacts with LIMA1. Interacts with CAV1. Interacts with PIP5K1C. Interacts with RAB8B. Interacts with DDR1; this stabilizes CDH1 at the cell surface and inhibits its internalization. Interacts with RAPGEF2. Interacts with KLRG1. Forms a ternary complex composed of ADAM10, CADH1 and EPHA4; within the complex, CADH1 is cleaved by ADAM10 which disrupts adherens junctions. Interacts with SPEF1. Interacts with CTNNB1 and PKP2. Interacts with AMOTL2; the interaction may facilitate binding of radial actin fibers to cell junction complexes. Interacts with DSG3; the interaction is required for CDH1 localization to developing adherens junctions. Post-translationally, during apoptosis or with calcium influx, cleaved by a membrane-bound metalloproteinase (ADAM10), PS1/gamma-secretase and caspase-3. Processing by the metalloproteinase, induced by calcium influx, causes disruption of cell-cell adhesion and the subsequent release of beta-catenin into the cytoplasm. The residual membrane-tethered cleavage product is rapidly degraded via an intracellular proteolytic pathway. Cleavage by caspase-3 releases the cytoplasmic tail resulting in disintegration of the actin microfilament system. The gamma-secretase-mediated cleavage promotes disassembly of adherens junctions. During development of the cochlear organ of Corti, cleavage by ADAM10 at adherens junctions promotes pillar cell separation. In terms of processing, O-glycosylated. O-manosylated by TMTC1, TMTC2, TMTC3 or TMTC4. Ser-287 and Thr-511 are O-manosylated by TMTC2 or TMTC4 but not TMTC1 or TMTC3. N-glycosylation at Asn-639 is essential for expression, folding and trafficking. Addition of bisecting N-acetylglucosamine by MGAT3 modulates its cell membrane location. Post-translationally, ubiquitinated by a SCF complex containing SKP2, which requires prior phosphorylation by CK1/CSNK1A1. Ubiquitinated by CBLL1/HAKAI, requires prior phosphorylation at Tyr-756. In terms of tissue distribution, expressed in inner and outer pillar cells of the organ of Corti (at protein level). Expressed in granuloma macrophages (at protein level). Expressed in the epidermal keratinocytes of the skin from birth (at protein level). Expressed in non-neural epithelial tissues.

It localises to the cell junction. The protein resides in the adherens junction. Its subcellular location is the cell membrane. The protein localises to the endosome. It is found in the golgi apparatus. It localises to the trans-Golgi network. The protein resides in the cytoplasm. Its subcellular location is the desmosome. In terms of biological role, cadherins are calcium-dependent cell adhesion proteins. They preferentially interact with themselves in a homophilic manner in connecting cells; cadherins may thus contribute to the sorting of heterogeneous cell types. CDH1 is involved in mechanisms regulating cell-cell adhesions, mobility and proliferation of epithelial cells. Promotes organization of radial actin fiber structure and cellular response to contractile forces, via its interaction with AMOTL2 which facilitates anchoring of radial actin fibers to CDH1 junction complexes at the cell membrane. Plays a role in the early stages of desmosome cell-cell junction formation via facilitating the recruitment of DSG2 and DSP to desmosome plaques. Has a potent invasive suppressor role. It is a ligand for integrin alpha-E/beta-7. Functionally, E-Cad/CTF2 promotes non-amyloidogenic degradation of Abeta precursors. Has a strong inhibitory effect on APP C99 and C83 production. Its function is as follows. (Microbial infection) Does not function as a receptor for L.monocytogenes internalin A (InlA); mutating a single surface-exposed residue confers receptor activity to this protein and promotes uptake of the bacteria. In Mus musculus (Mouse), this protein is Cadherin-1 (Cdh1).